The chain runs to 735 residues: MKLRLFTSGILGDDKRSMETTQDLWFFRIVHDFFATFEGVSVYQKIFASHFGQIALIFLWASGNLFYVSSQGNFEQWVSDPLHTRPIAHAIWDPQFGQSAVAAYTRAGASGPVTLSTSGLYQWWYTIGMRSNDDLSTASMFLLILSVLFLIAGFIHGYVPLFKPSLAFFKDAESRLNHHLSALFGVSSLAWTGHLIHVAIPESRGQHIRWNNYLSTLPHPDGLAPFFSGNWSAYSTNPDTFNHVFGTSNGAGSAILTFQGGLNPQTGSLWLTDIAHHHLAIAVLFIVAGHMYKTNWSIGHNLQELVEGHNIINGRFNHKGLYQTVNTCLNLQLALALAAVGTICSLVAQHMYSLPAYAYMAQDYVTQAALYTHHQYIAGFIMCGAFAHGTIFLVTEYDPEINADNVLARFLENREVIISHLSWVCLFLGFHTLGLYVHNDVMLAFETPEKQILIEPIFAQYIQAAQGKSSYDFNVLLSSSVSDAYLIPTQSANKGIWLSGWLNSINNNTNSLFIEIGPGDFLVHHAIALGLHTTTLILVKGALDARGSKLMPDKKRFGYGFPCDGPGRGGTCDISAWDAFYLAIFWMLNTIGWVTFYWHWKHLGIWQGNTKQFYESSTYLMGWLRDYLWLNSSQLINGYNPLGMNALSVWSWMFLFGHLIYATGFMFLISWRGYWQELIETLVWAHDRLPIVLWPEKPVALTIVQARFVGLIHFTVGYILTYAAFLIASTSGKFS.

A run of 8 helical transmembrane segments spans residues 46-69 (IFASHFGQIALIFLWASGNLFYVS), 135-158 (LSTASMFLLILSVLFLIAGFIHGY), 176-200 (LNHHLSALFGVSSLAWTGHLIHVAI), 274-292 (IAHHHLAIAVLFIVAGHMY), 329-352 (LNLQLALALAAVGTICSLVAQHMY), 368-394 (AALYTHHQYIAGFIMCGAFAHGTIFLV), 416-438 (VIISHLSWVCLFLGFHTLGLYVH), and 521-539 (FLVHHAIALGLHTTTLILV). Residues cysteine 563 and cysteine 572 each contribute to the [4Fe-4S] cluster site. 2 helical membrane-spanning segments follow: residues 579–600 (AFYLAIFWMLNTIGWVTFYWHW) and 647–669 (LSVWSWMFLFGHLIYATGFMFLI). Chlorophyll a-binding residues include histidine 658, methionine 666, and tyrosine 674. Tryptophan 675 is a phylloquinone binding site. A helical membrane pass occupies residues 708-728 (FVGLIHFTVGYILTYAAFLIA).

Belongs to the PsaA/PsaB family. The PsaA/B heterodimer binds the P700 chlorophyll special pair and subsequent electron acceptors. PSI consists of a core antenna complex that captures photons, and an electron transfer chain that converts photonic excitation into a charge separation. The eukaryotic PSI reaction center is composed of at least 11 subunits. Requires P700 is a chlorophyll a/chlorophyll a' dimer, A0 is one or more chlorophyll a, A1 is one or both phylloquinones and FX is a shared 4Fe-4S iron-sulfur center. as cofactor.

It localises to the plastid. Its subcellular location is the chloroplast thylakoid membrane. It carries out the reaction reduced [plastocyanin] + hnu + oxidized [2Fe-2S]-[ferredoxin] = oxidized [plastocyanin] + reduced [2Fe-2S]-[ferredoxin]. PsaA and PsaB bind P700, the primary electron donor of photosystem I (PSI), as well as the electron acceptors A0, A1 and FX. PSI is a plastocyanin/cytochrome c6-ferredoxin oxidoreductase, converting photonic excitation into a charge separation, which transfers an electron from the donor P700 chlorophyll pair to the spectroscopically characterized acceptors A0, A1, FX, FA and FB in turn. Oxidized P700 is reduced on the lumenal side of the thylakoid membrane by plastocyanin or cytochrome c6. This is Photosystem I P700 chlorophyll a apoprotein A2 from Bigelowiella natans (Pedinomonas minutissima).